The primary structure comprises 66 residues: Large ribosomal subunit protein bL31 (66 aa).

Residues Cys-16, Cys-18, Cys-36, and Cys-39 each contribute to the Zn(2+) site.

It belongs to the bacterial ribosomal protein bL31 family. Type A subfamily. Part of the 50S ribosomal subunit. The cofactor is Zn(2+).

Its function is as follows. Binds the 23S rRNA. The sequence is that of Large ribosomal subunit protein bL31 from Campylobacter hominis (strain ATCC BAA-381 / DSM 21671 / CCUG 45161 / LMG 19568 / NCTC 13146 / CH001A).